Reading from the N-terminus, the 522-residue chain is MTTITEELIARLKQGITSGVDLQPRQVNVGTVIAVGDGVARLSGLDQVVASEIVEFPPKAGRNESIYGIALNLEQDSVAAIILGDDETIEEGDMVTSTGRVISVPVGQGLLGRVVNPLGQPIDGKGPIVYEKTRPIERIAPGVITRKSVDTPVQTGIIAIDALIPIGRGQRELIIGDRQTGKTAVAIDTILNQKGQGMVCIYVAIGQRRAQVAQVVGTLERFGAMEYTIVVSATASESAALQYIAPYAGCAMGEEIMENGVMLNGQLVKDALIVYDDLSKHAVAYRQVSLLLRRPPGREAYPGDVFYLHSRLLERAARLNEEYGGGSLTALPVIETQANDVSAYIPTNVISITDGQIYLESDLFNAGQRPALNVGISVSRVGGAAQTRAMRAVAGKLKGELAQFRDLAAFAQFASDLDATTKAQIERGQRLQELLKQPQYQPLPVEDQVAVLYAATNNYLDDVPVPLITKWRDDFLAFLRTAHPEVRKLIYDNRLDRKFPTPEVKEALEAAIKEFKATSNYS.

176 to 183 (GDRQTGKT) contacts ATP.

This sequence belongs to the ATPase alpha/beta chains family. F-type ATPases have 2 components, CF(1) - the catalytic core - and CF(0) - the membrane proton channel. CF(1) has five subunits: alpha(3), beta(3), gamma(1), delta(1), epsilon(1). CF(0) has four main subunits: a(1), b(1), b'(1) and c(9-12).

It localises to the cell membrane. The enzyme catalyses ATP + H2O + 4 H(+)(in) = ADP + phosphate + 5 H(+)(out). In terms of biological role, produces ATP from ADP in the presence of a proton gradient across the membrane. The alpha chain is a regulatory subunit. This Chloroflexus aurantiacus (strain ATCC 29366 / DSM 635 / J-10-fl) protein is ATP synthase subunit alpha.